The chain runs to 1222 residues: MEAARTERPAGRPGAPLVRTGLLLLSTWVLAGAEITWDATGGPGRPAAPASRPPALSPLSPRAVASQWPEELASARRAAVLGRRAGPELLPQQGGGRGGEMQVEAGGTSPAGERRGRGIPAPAKLGGARRSRRAQPPITQERGDAWATAPADGSRGSRPLAKGSREEVKAPRAGGSAAEDLRLPSTSFALTGDSAHNQAMVHWSGHNSSVILILTKLYDFNLGSVTESSLWRSTDYGTTYEKLNDKVGLKTVLSYLYVNPTNKRKIMLLSDPEMESSILISSDEGATYQKYRLTFYIQSLLFHPKQEDWVLAYSLDQKLYSSMDFGRRWQLMHERITPNRFYWSVAGLDKEADLVHMEVRTTDGYAHYLTCRIQECAETTRSGPFARSIDISSLVVQDEYIFIQVTTSGRASYYVSYRREAFAQIKLPKYSLPKDMHIISTDENQVFAAVQEWNQNDTYNLYISDTRGIYFTLAMENIKSSRGLMGNIIIELYEVAGIKGIFLANKKVDDQVKTYITYNKGRDWRLLQAPDVDLRGSPVHCLLPFCSLHLHLQLSENPYSSGRISSKETAPGLVVATGNIGPELSYTDIGVFISSDGGNTWRQIFDEEYNVWFLDWGGALVAMKHTPLPVRHLWVSFDEGHSWDKYGFTSVPLFVDGALVEAGMETHIMTVFGHFSLRSEWQLVKVDYKSIFSRHCTKEDYQTWHLLNQGEPCVMGERKIFKKRKPGAQCALGRDHSGSVVSEPCVCANWDFECDYGYERHGESQCVPAFWYNPASPSKDCSLGQSYLNSTGYRRIVSNNCTDGLREKYTAKAQMCPGKAPRGLHVVTTDGRLVAEQGHNATFIILMEEGDLQRTNIQLDFGDGIAVSYANFSPIEDGIKHVYKSAGIFQVTAYAENNLGSDTAVLFLHVVCPVEHVHLRVPFVAIRNKEVNISAVVWPSQLGTLTYFWWFGNSTKPLITLDSSISFTFLAEGTDTITVQVAAGNALIQDTKEIAVHEYFQSQLLSFSPNLDYHNPDIPEWRKDIGNVIKRALVKVTSVPEDQILIAVFPGLPTSAELFILPPKNLTERRKGNEGDLEQIVETLFNALNQNLVQFELKPGVQVIVYVTQLTLAPLVDSSAGHSSSAMLMLLSVVFVGLAVFLIYKFKRKIPWINIYAQVQHDKEQEMIGSVSQSENAPKITLSDFTEPEELLDKELDTRVIGGIATIANSESTKEIPNCTSV.

The signal sequence occupies residues M1–A33. Positions E34–R133 are cleaved as a propeptide — removed in mature form. Disordered stretches follow at residues T40–E70 and P87–D180. Over Q135 to S1125 the chain is Lumenal. The N-linked (GlcNAc...) asparagine glycan is linked to N207. BNR repeat units lie at residues W231–K242, L279–K290, and Y320–L331. N-linked (GlcNAc...) asparagine glycosylation occurs at N456. BNR repeat units follow at residues Y515–L526, F592–Q603, and W634–K645. N-linked (GlcNAc...) asparagine glycosylation is found at N789, N800, N840, N932, N953, and N1065. Residues V827–V917 form the PKD domain. The helical transmembrane segment at A1126–F1146 threads the bilayer. At K1147–V1222 the chain is on the cytoplasmic side. The interaction with DLG4 stretch occupies residues C1219–V1222.

Belongs to the VPS10-related sortilin family. SORCS subfamily. Homodimer. Interacts with NGF. Interacts with DLG4/PSD95 and PICK1. In terms of tissue distribution, highly expressed in brain.

The protein localises to the cell membrane. It is found in the synaptic cell membrane. Its subcellular location is the postsynaptic density. In terms of biological role, plays an important role in modulating synaptic transmission and plasticity in the hippocampus, probably by affecting the trafficking and localization ofAMPA-type glutamate receptors in the postsynaptic density. This Homo sapiens (Human) protein is VPS10 domain-containing receptor SorCS3 (SORCS3).